A 354-amino-acid chain; its full sequence is UPF0425 pyridoxal phosphate-dependent protein MMP0002 (354 aa).

N6-(pyridoxal phosphate)lysine is present on K210.

Belongs to the UPF0425 family. Pyridoxal 5'-phosphate serves as cofactor.

The polypeptide is UPF0425 pyridoxal phosphate-dependent protein MMP0002 (Methanococcus maripaludis (strain DSM 14266 / JCM 13030 / NBRC 101832 / S2 / LL)).